Here is a 463-residue protein sequence, read N- to C-terminus: tRNA-2-methylthio-N(6)-dimethylallyladenosine synthase (463 aa).

Residues 19 to 135 form the MTTase N-terminal domain; it reads GSYWITTFGC…LESLLNQVDS (117 aa). Residues Cys-28, Cys-64, Cys-98, Cys-170, Cys-174, and Cys-177 each contribute to the [4Fe-4S] cluster site. Positions 156-393 constitute a Radical SAM core domain; it reads RDSSICGWVN…NSLVENIAKE (238 aa). In terms of domain architecture, TRAM spans 396–463; that stretch reads QRYKNTSQEI…RPFSLTAKLL (68 aa).

This sequence belongs to the methylthiotransferase family. MiaB subfamily. Monomer. Requires [4Fe-4S] cluster as cofactor.

The protein resides in the cytoplasm. The enzyme catalyses N(6)-dimethylallyladenosine(37) in tRNA + (sulfur carrier)-SH + AH2 + 2 S-adenosyl-L-methionine = 2-methylsulfanyl-N(6)-dimethylallyladenosine(37) in tRNA + (sulfur carrier)-H + 5'-deoxyadenosine + L-methionine + A + S-adenosyl-L-homocysteine + 2 H(+). In terms of biological role, catalyzes the methylthiolation of N6-(dimethylallyl)adenosine (i(6)A), leading to the formation of 2-methylthio-N6-(dimethylallyl)adenosine (ms(2)i(6)A) at position 37 in tRNAs that read codons beginning with uridine. The protein is tRNA-2-methylthio-N(6)-dimethylallyladenosine synthase of Prochlorococcus marinus (strain NATL2A).